The chain runs to 494 residues: Glutamyl-tRNA(Gln) amidotransferase subunit A (494 aa).

Catalysis depends on charge relay system residues Lys81 and Ser156. Residue Ser180 is the Acyl-ester intermediate of the active site.

The protein belongs to the amidase family. GatA subfamily. Heterotrimer of A, B and C subunits.

It catalyses the reaction L-glutamyl-tRNA(Gln) + L-glutamine + ATP + H2O = L-glutaminyl-tRNA(Gln) + L-glutamate + ADP + phosphate + H(+). In terms of biological role, allows the formation of correctly charged Gln-tRNA(Gln) through the transamidation of misacylated Glu-tRNA(Gln) in organisms which lack glutaminyl-tRNA synthetase. The reaction takes place in the presence of glutamine and ATP through an activated gamma-phospho-Glu-tRNA(Gln). This chain is Glutamyl-tRNA(Gln) amidotransferase subunit A, found in Mycolicibacterium gilvum (strain PYR-GCK) (Mycobacterium gilvum (strain PYR-GCK)).